Consider the following 633-residue polypeptide: MTPSNEPGKQDQIPQPGPTIPNQYSFLWLSAAIFLMFLWLQGNNQQQQQELAYSEFKQAVISGQVAEVTLRTEEISGSFTDSGASRFANDSRPPSSSFITLRPQVEDPELLPLLERQEVLVRGSRSGRPWWQELILGFLPWILLLALMFWFWGAAQKRMTQGGGPFDYGKSRARRARRETSTTTLDDVAGIESAKRDISEIIDFLKSPDKYRRLGAVMPKGVLLVGPPGTGKTLLARAIAGEAEVPFFSISASEFIEMFVGVGAARVRDMFQTARKEAPALIFIDELDAVGRSRGAGLGGGHDEREQTLNQILTEMDGFEAHENVLVLAATNRPDVLDTALLRPGRFDRKITLDRPHREAREAILKVHVRKVPLAADVDLTQVAARTTGFSGADLKNLVNEAALTAARDNLVEVNNHCFEVAHDRLILGEERDAQLTPEEREAVAYHECGHAIMAYYMPKADPLTKITIIPHGMAMGVTEQTPKEDKYNYTESYLEDRIKVMLGGRSAEKIIYGEVSTGAQNDLKEATKLLRRMVGQWGMSEKIGPLGLGIGEEHVFLGREMGAPREYSEKLAEMIDSEIQSQLLAFEAFTVSFLTEHRQELDALARAVMKRETLSAGEITEVLEEARSRETA.

Topologically, residues 1–19 (MTPSNEPGKQDQIPQPGPT) are cytoplasmic. A helical membrane pass occupies residues 20-40 (IPNQYSFLWLSAAIFLMFLWL). Topologically, residues 41 to 133 (QGNNQQQQQE…SRSGRPWWQE (93 aa)) are periplasmic. Residues 134–154 (LILGFLPWILLLALMFWFWGA) traverse the membrane as a helical segment. The Cytoplasmic portion of the chain corresponds to 155 to 633 (AQKRMTQGGG…LEEARSRETA (479 aa)). Residue 226-233 (GPPGTGKT) coordinates ATP. Histidine 447 serves as a coordination point for Zn(2+). Glutamate 448 is a catalytic residue. Residues histidine 451 and aspartate 523 each contribute to the Zn(2+) site.

This sequence in the central section; belongs to the AAA ATPase family. In the C-terminal section; belongs to the peptidase M41 family. Homohexamer. It depends on Zn(2+) as a cofactor.

Its subcellular location is the cell inner membrane. Functionally, acts as a processive, ATP-dependent zinc metallopeptidase for both cytoplasmic and membrane proteins. Plays a role in the quality control of integral membrane proteins. The polypeptide is ATP-dependent zinc metalloprotease FtsH (Marinobacter nauticus (strain ATCC 700491 / DSM 11845 / VT8) (Marinobacter aquaeolei)).